A 128-amino-acid polypeptide reads, in one-letter code: uncharacterized protein (128 aa).

2 disordered regions span residues leucine 62–valine 83 and phenylalanine 101–proline 128. Residues phenylalanine 101 to threonine 114 are compositionally biased toward low complexity.

The protein localises to the cytoplasm. Its subcellular location is the nucleus. This is an uncharacterized protein from Saccharomyces cerevisiae (strain ATCC 204508 / S288c) (Baker's yeast).